A 244-amino-acid chain; its full sequence is Type III pantothenate kinase (244 aa).

Position 8–15 (8–15 (DQGNSACK)) interacts with ATP. 94-97 (GADR) contacts substrate. D96 (proton acceptor) is an active-site residue. D117 serves as a coordination point for K(+). T120 lines the ATP pocket. A substrate-binding site is contributed by T175.

This sequence belongs to the type III pantothenate kinase family. Homodimer. Requires NH4(+) as cofactor. The cofactor is K(+).

The protein localises to the cytoplasm. The enzyme catalyses (R)-pantothenate + ATP = (R)-4'-phosphopantothenate + ADP + H(+). The protein operates within cofactor biosynthesis; coenzyme A biosynthesis; CoA from (R)-pantothenate: step 1/5. Catalyzes the phosphorylation of pantothenate (Pan), the first step in CoA biosynthesis. This Porphyromonas gingivalis (strain ATCC 33277 / DSM 20709 / CIP 103683 / JCM 12257 / NCTC 11834 / 2561) protein is Type III pantothenate kinase.